Consider the following 298-residue polypeptide: MTPLSTVVRAPATIANVGPGFDVFGLAVDGFHDVVEAHEADGVRIVTEDPIPTDPERNTAGRVALRMVEEFDLPGVSLEIRKGVPMGGLGSSAASAVAAAVAIDREFELGLEESELLRFAAEGERAAAGEPHYDNVAPCLLGGFVIWRFEREYVRLEVPGDLRFVTVTPTGVRVTTEEARKALRERPPSLDDVVNNLSAVALMVHALHEEDAETFARMVGWDRISEPVRKRFVPRYRELRETAYGTGALGFAISGAGPTVFAVCWREDAEDVRTALEDVLDGKCVSAVHRVSDGAEVA.

Residue 85–95 (PMGGLGSSAAS) coordinates ATP.

It belongs to the GHMP kinase family. Homoserine kinase subfamily.

Its subcellular location is the cytoplasm. It catalyses the reaction L-homoserine + ATP = O-phospho-L-homoserine + ADP + H(+). It functions in the pathway amino-acid biosynthesis; L-threonine biosynthesis; L-threonine from L-aspartate: step 4/5. Catalyzes the ATP-dependent phosphorylation of L-homoserine to L-homoserine phosphate. The protein is Homoserine kinase of Methanopyrus kandleri (strain AV19 / DSM 6324 / JCM 9639 / NBRC 100938).